The sequence spans 87 residues: MSQAEFEKAAEEVKNLKTKPADAEMLFIYSHYKQATVGDVNTERPGMLDLKGKAKWDAWNELKGTSKESAMRAYVDKVEELKQKYGI.

Serine 2 carries the N-acetylserine modification. Positions 2-87 (SQAEFEKAAE…VEELKQKYGI (86 aa)) constitute an ACB domain. An N6-acetyllysine; alternate modification is found at lysine 8. Lysine 8 is subject to N6-succinyllysine; alternate. Lysine 14 provides a ligand contact to an acyl-CoA. The residue at position 17 (lysine 17) is an N6-succinyllysine. Lysine 19 bears the N6-acetyllysine mark. Position 29 is a phosphotyrosine (tyrosine 29). Residues 29–33 (YSHYK), lysine 51, lysine 55, and tyrosine 74 each bind an acyl-CoA. Lysine 51 carries the N6-acetyllysine modification. Position 55 is an N6-acetyllysine; alternate (lysine 55). An N6-succinyllysine; alternate modification is found at lysine 55. N6-(2-hydroxyisobutyryl)lysine; alternate is present on lysine 55. The residue at position 55 (lysine 55) is an N6-malonyllysine; alternate. Position 77 is an N6-acetyllysine; alternate (lysine 77). Lysine 77 is subject to N6-succinyllysine; alternate.

The protein belongs to the ACBP family. As to quaternary structure, monomer.

The protein localises to the endoplasmic reticulum. It is found in the golgi apparatus. Functionally, binds medium- and long-chain acyl-CoA esters with very high affinity and may function as an intracellular carrier of acyl-CoA esters. It is also able to displace diazepam from the benzodiazepine (BZD) recognition site located on the GABA type A receptor. It is therefore possible that this protein also acts as a neuropeptide to modulate the action of the GABA receptor. This Oryctolagus cuniculus (Rabbit) protein is Acyl-CoA-binding protein (DBI).